A 514-amino-acid chain; its full sequence is 2,3-bisphosphoglycerate-independent phosphoglycerate mutase (514 aa).

Residues aspartate 14 and serine 64 each contribute to the Mn(2+) site. The active-site Phosphoserine intermediate is serine 64. Substrate is bound by residues histidine 125, 155-156, arginine 187, arginine 193, 263-266, and lysine 336; these read RD and RADR. Mn(2+) contacts are provided by aspartate 403, histidine 407, aspartate 444, histidine 445, and histidine 463.

The protein belongs to the BPG-independent phosphoglycerate mutase family. In terms of assembly, monomer. The cofactor is Mn(2+).

It carries out the reaction (2R)-2-phosphoglycerate = (2R)-3-phosphoglycerate. It functions in the pathway carbohydrate degradation; glycolysis; pyruvate from D-glyceraldehyde 3-phosphate: step 3/5. In terms of biological role, catalyzes the interconversion of 2-phosphoglycerate and 3-phosphoglycerate. This Salmonella paratyphi A (strain ATCC 9150 / SARB42) protein is 2,3-bisphosphoglycerate-independent phosphoglycerate mutase.